The chain runs to 425 residues: Protein PTI1 (425 aa).

Residue serine 272 is modified to Phosphoserine.

In terms of assembly, component of the cleavage and polyadenylation factor (CPF) complex, which is composed of PTI1, SYC1, SSU72, GLC7, MPE1, REF2, PFS2, PTA1, YSH1/BRR5, SWD2, CFT2/YDH1, YTH1, CFT1/YHH1, FIP1 and PAP1. Component of the APT complex, which is a subcomplex of CPF, and is composed of PTI1, SYC1, SSU72, GLC7, REF2, PTA1 and SWD2.

Its subcellular location is the nucleus. Functionally, component of the cleavage and polyadenylation factor (CPF) complex, which plays a key role in polyadenylation-dependent pre-mRNA 3'-end formation and cooperates with cleavage factors including the CFIA complex and NAB4/CFIB. Component of the APT complex, which may be involved in polyadenylation-independent transcript 3'-end formation. PTI1 is required for 3'-end formation of snoRNAs. The chain is Protein PTI1 (PTI1) from Saccharomyces cerevisiae (strain ATCC 204508 / S288c) (Baker's yeast).